We begin with the raw amino-acid sequence, 175 residues long: O-acetyl-ADP-ribose deacetylase (175 aa).

The region spanning 1-175 is the Macro domain; it reads MAVQPEVILG…IYRRLLASYP (175 aa). Substrate-binding positions include 11 to 12, Asn-25, 33 to 35, and 122 to 126; these read DI, GVD, and STGVY. The active-site Proton acceptor is Asp-35.

It belongs to the MacroD-type family. YmdB subfamily. Homodimer. Interacts with RNase III.

It carries out the reaction 3''-O-acetyl-ADP-D-ribose + H2O = ADP-D-ribose + acetate + H(+). The catalysed reaction is 2''-O-acetyl-ADP-D-ribose + H2O = ADP-D-ribose + acetate + H(+). Its function is as follows. Deacetylates O-acetyl-ADP ribose to yield ADP-ribose and free acetate. Down-regulates ribonuclease 3 (RNase III) activity. Acts by interacting directly with the region of the ribonuclease that is required for dimerization/activation. The sequence is that of O-acetyl-ADP-ribose deacetylase from Klebsiella pneumoniae (strain 342).